The following is a 561-amino-acid chain: Potassium-transporting ATPase potassium-binding subunit (561 aa).

10 helical membrane passes run 4–24 (IVMQ…PLGI), 65–85 (AVSV…VLML), 133–153 (IGLT…LFAV), 177–197 (LYIL…QGVV), 253–273 (FTNL…VVMF), 285–305 (AIMT…TISE), 380–400 (GLYG…LLVG), 417–437 (MVCL…AVAV), 484–504 (MVGA…ALYL), and 528–548 (FIGL…LPAL).

Belongs to the KdpA family. The system is composed of three essential subunits: KdpA, KdpB and KdpC.

The protein localises to the cell membrane. In terms of biological role, part of the high-affinity ATP-driven potassium transport (or Kdp) system, which catalyzes the hydrolysis of ATP coupled with the electrogenic transport of potassium into the cytoplasm. This subunit binds the extracellular potassium ions and delivers the ions to the membrane domain of KdpB through an intramembrane tunnel. The polypeptide is Potassium-transporting ATPase potassium-binding subunit (Listeria monocytogenes serotype 4a (strain HCC23)).